The sequence spans 108 residues: Parvalbumin beta (108 aa).

Ala-1 carries the N-acetylalanine modification. EF-hand domains lie at 38–73 (KSNE…FSAG) and 77–108 (LTKT…LVKA). Ca(2+) contacts are provided by Asp-51, Asp-53, Ser-55, Phe-57, Glu-59, Glu-62, Asp-90, Asp-92, Asp-94, Lys-96, and Glu-101.

Belongs to the parvalbumin family.

Functionally, in muscle, parvalbumin is thought to be involved in relaxation after contraction. It binds two calcium ions. This chain is Parvalbumin beta, found in Latimeria chalumnae (Coelacanth).